The chain runs to 122 residues: Large ribosomal subunit protein uL14 (122 aa).

The protein belongs to the universal ribosomal protein uL14 family. In terms of assembly, part of the 50S ribosomal subunit. Forms a cluster with proteins L3 and L19. In the 70S ribosome, L14 and L19 interact and together make contacts with the 16S rRNA in bridges B5 and B8. Interacts with ribosomal silencing factor RsfS, which may inhibit ribosomal subunit association.

Functionally, binds to 23S rRNA. Forms part of two intersubunit bridges in the 70S ribosome. The polypeptide is Large ribosomal subunit protein uL14 (Treponema pallidum (strain Nichols)).